Here is a 239-residue protein sequence, read N- to C-terminus: UDP-2,3-diacylglucosamine hydrolase (239 aa).

Mn(2+)-binding residues include Asp8, His10, Asp41, Asn78, and His113. 78 to 79 (NR) contacts substrate. Positions 121, 159, 163, 166, and 194 each coordinate substrate. His194 and His196 together coordinate Mn(2+).

Belongs to the LpxH family. It depends on Mn(2+) as a cofactor.

The protein localises to the cell inner membrane. The catalysed reaction is UDP-2-N,3-O-bis[(3R)-3-hydroxytetradecanoyl]-alpha-D-glucosamine + H2O = 2-N,3-O-bis[(3R)-3-hydroxytetradecanoyl]-alpha-D-glucosaminyl 1-phosphate + UMP + 2 H(+). Its pathway is glycolipid biosynthesis; lipid IV(A) biosynthesis; lipid IV(A) from (3R)-3-hydroxytetradecanoyl-[acyl-carrier-protein] and UDP-N-acetyl-alpha-D-glucosamine: step 4/6. Hydrolyzes the pyrophosphate bond of UDP-2,3-diacylglucosamine to yield 2,3-diacylglucosamine 1-phosphate (lipid X) and UMP by catalyzing the attack of water at the alpha-P atom. Involved in the biosynthesis of lipid A, a phosphorylated glycolipid that anchors the lipopolysaccharide to the outer membrane of the cell. The protein is UDP-2,3-diacylglucosamine hydrolase of Shewanella sp. (strain MR-4).